The primary structure comprises 243 residues: Leucyl/phenylalanyl-tRNA--protein transferase (243 aa).

It belongs to the L/F-transferase family.

The protein localises to the cytoplasm. The enzyme catalyses N-terminal L-lysyl-[protein] + L-leucyl-tRNA(Leu) = N-terminal L-leucyl-L-lysyl-[protein] + tRNA(Leu) + H(+). It catalyses the reaction N-terminal L-arginyl-[protein] + L-leucyl-tRNA(Leu) = N-terminal L-leucyl-L-arginyl-[protein] + tRNA(Leu) + H(+). It carries out the reaction L-phenylalanyl-tRNA(Phe) + an N-terminal L-alpha-aminoacyl-[protein] = an N-terminal L-phenylalanyl-L-alpha-aminoacyl-[protein] + tRNA(Phe). Its function is as follows. Functions in the N-end rule pathway of protein degradation where it conjugates Leu, Phe and, less efficiently, Met from aminoacyl-tRNAs to the N-termini of proteins containing an N-terminal arginine or lysine. In Saccharophagus degradans (strain 2-40 / ATCC 43961 / DSM 17024), this protein is Leucyl/phenylalanyl-tRNA--protein transferase.